A 269-amino-acid chain; its full sequence is uncharacterized protein (269 aa).

8 helical membrane passes run 9 to 29, 50 to 70, 82 to 102, 107 to 127, 147 to 167, 173 to 193, 200 to 220, and 224 to 244; these read YIIGLVLALGVSFATLLAHLF, FMLGGYLLVEYLSFLLMIVPL, FSIIHTSIWYNVFVVFTVWAF, LYWTAFFSLCLFSSSFTMYGQ, LVFGKSLWFVVYAFSAALHCT, VFSNVFIWFFAAMYLVPILGF, LVSAYLFLSIGIGQMFIHLFA, and IFAFIIAGLMTLFAALLFLLP.

It localises to the membrane. This is an uncharacterized protein from Schizosaccharomyces pombe (strain 972 / ATCC 24843) (Fission yeast).